Here is a 348-residue protein sequence, read N- to C-terminus: Probable dual-specificity RNA methyltransferase RlmN (348 aa).

The active-site Proton acceptor is Glu95. The Radical SAM core domain occupies 101 to 335 (SGNRLTICVS…VSLRASRGLD (235 aa)). A disulfide bond links Cys108 and Cys340. [4Fe-4S] cluster-binding residues include Cys115, Cys119, and Cys122. S-adenosyl-L-methionine is bound by residues 162–163 (GE), Ser192, 221–223 (SLH), and Asn297. The active-site S-methylcysteine intermediate is Cys340.

It belongs to the radical SAM superfamily. RlmN family. The cofactor is [4Fe-4S] cluster.

It is found in the cytoplasm. It carries out the reaction adenosine(2503) in 23S rRNA + 2 reduced [2Fe-2S]-[ferredoxin] + 2 S-adenosyl-L-methionine = 2-methyladenosine(2503) in 23S rRNA + 5'-deoxyadenosine + L-methionine + 2 oxidized [2Fe-2S]-[ferredoxin] + S-adenosyl-L-homocysteine. The enzyme catalyses adenosine(37) in tRNA + 2 reduced [2Fe-2S]-[ferredoxin] + 2 S-adenosyl-L-methionine = 2-methyladenosine(37) in tRNA + 5'-deoxyadenosine + L-methionine + 2 oxidized [2Fe-2S]-[ferredoxin] + S-adenosyl-L-homocysteine. In terms of biological role, specifically methylates position 2 of adenine 2503 in 23S rRNA and position 2 of adenine 37 in tRNAs. In Prochlorococcus marinus (strain SARG / CCMP1375 / SS120), this protein is Probable dual-specificity RNA methyltransferase RlmN.